A 405-amino-acid chain; its full sequence is Cysteine desulfurase IscS (405 aa).

Residues 75 to 76 (AT), asparagine 155, glutamine 183, and 203 to 205 (SGH) each bind pyridoxal 5'-phosphate. Lysine 206 is subject to N6-(pyridoxal phosphate)lysine. Pyridoxal 5'-phosphate is bound at residue threonine 243. Cysteine 329 (cysteine persulfide intermediate) is an active-site residue. A [2Fe-2S] cluster-binding site is contributed by cysteine 329.

It belongs to the class-V pyridoxal-phosphate-dependent aminotransferase family. NifS/IscS subfamily. In terms of assembly, homodimer. Forms a heterotetramer with IscU, interacts with other sulfur acceptors. Requires pyridoxal 5'-phosphate as cofactor.

It is found in the cytoplasm. The enzyme catalyses (sulfur carrier)-H + L-cysteine = (sulfur carrier)-SH + L-alanine. It participates in cofactor biosynthesis; iron-sulfur cluster biosynthesis. Functionally, master enzyme that delivers sulfur to a number of partners involved in Fe-S cluster assembly, tRNA modification or cofactor biosynthesis. Catalyzes the removal of elemental sulfur atoms from cysteine to produce alanine. Functions as a sulfur delivery protein for Fe-S cluster synthesis onto IscU, an Fe-S scaffold assembly protein, as well as other S acceptor proteins. The polypeptide is Cysteine desulfurase IscS (Pseudoalteromonas translucida (strain TAC 125)).